Consider the following 253-residue polypeptide: DNA repair protein RecO (253 aa).

This sequence belongs to the RecO family.

Its function is as follows. Involved in DNA repair and RecF pathway recombination. This chain is DNA repair protein RecO, found in Nitrobacter hamburgensis (strain DSM 10229 / NCIMB 13809 / X14).